Reading from the N-terminus, the 477-residue chain is Glycogen synthase (477 aa).

K15 is a binding site for ADP-alpha-D-glucose.

This sequence belongs to the glycosyltransferase 1 family. Bacterial/plant glycogen synthase subfamily.

The catalysed reaction is [(1-&gt;4)-alpha-D-glucosyl](n) + ADP-alpha-D-glucose = [(1-&gt;4)-alpha-D-glucosyl](n+1) + ADP + H(+). It participates in glycan biosynthesis; glycogen biosynthesis. Functionally, synthesizes alpha-1,4-glucan chains using ADP-glucose. In Halorhodospira halophila (strain DSM 244 / SL1) (Ectothiorhodospira halophila (strain DSM 244 / SL1)), this protein is Glycogen synthase.